The primary structure comprises 134 residues: ATP synthase epsilon chain (134 aa).

The protein belongs to the ATPase epsilon chain family. As to quaternary structure, F-type ATPases have 2 components, CF(1) - the catalytic core - and CF(0) - the membrane proton channel. CF(1) has five subunits: alpha(3), beta(3), gamma(1), delta(1), epsilon(1). CF(0) has three main subunits: a, b and c.

The protein resides in the cell membrane. Produces ATP from ADP in the presence of a proton gradient across the membrane. This is ATP synthase epsilon chain from Alkaliphilus oremlandii (strain OhILAs) (Clostridium oremlandii (strain OhILAs)).